The following is a 197-amino-acid chain: Probable GTP-binding protein EngB (197 aa).

Positions aspartate 24–lysine 197 constitute an EngB-type G domain. Residues glycine 32–serine 39, glycine 59–leucine 63, aspartate 77–glycine 80, threonine 144–aspartate 147, and phenylalanine 176–serine 178 each bind GTP. Serine 39 and threonine 61 together coordinate Mg(2+).

This sequence belongs to the TRAFAC class TrmE-Era-EngA-EngB-Septin-like GTPase superfamily. EngB GTPase family. The cofactor is Mg(2+).

Functionally, necessary for normal cell division and for the maintenance of normal septation. The polypeptide is Probable GTP-binding protein EngB (Streptococcus gordonii (strain Challis / ATCC 35105 / BCRC 15272 / CH1 / DL1 / V288)).